A 156-amino-acid polypeptide reads, in one-letter code: Inner membrane protein YlaC (156 aa).

Residues 1–35 are Cytoplasmic-facing; the sequence is MTEIQRLLTETIESLNTREKRDNKPRFSISFIRKH. The chain crosses the membrane as a helical span at residues 36-56; it reads PGLFIGMYVAFFATLAVMLQS. Residues 57-58 lie on the Periplasmic side of the membrane; the sequence is ET. Residues 59–79 traverse the membrane as a helical segment; it reads LSGSVWLLVVLFILLNGFFFF. The Cytoplasmic portion of the chain corresponds to 80–156; sequence DVYPRYRYED…FTLARAESTS (77 aa).

It localises to the cell inner membrane. This is Inner membrane protein YlaC (ylaC) from Escherichia coli (strain K12).